The sequence spans 501 residues: Probable cytosol aminopeptidase (501 aa).

Mn(2+)-binding residues include K268 and D273. The active site involves K280. Residues D291, D350, and E352 each contribute to the Mn(2+) site. R354 is a catalytic residue.

Belongs to the peptidase M17 family. Mn(2+) serves as cofactor.

Its subcellular location is the cytoplasm. The enzyme catalyses Release of an N-terminal amino acid, Xaa-|-Yaa-, in which Xaa is preferably Leu, but may be other amino acids including Pro although not Arg or Lys, and Yaa may be Pro. Amino acid amides and methyl esters are also readily hydrolyzed, but rates on arylamides are exceedingly low.. It carries out the reaction Release of an N-terminal amino acid, preferentially leucine, but not glutamic or aspartic acids.. In terms of biological role, presumably involved in the processing and regular turnover of intracellular proteins. Catalyzes the removal of unsubstituted N-terminal amino acids from various peptides. This chain is Probable cytosol aminopeptidase, found in Colwellia psychrerythraea (strain 34H / ATCC BAA-681) (Vibrio psychroerythus).